Consider the following 549-residue polypeptide: MNWRRIVWLLALVTLPTLAEETPLQLVLRGAQHDQLYQLSSSGVTKVSALPDSLTTPLGSLWKLYVYAWLEDTHQPEQPYQCRGNSPEEVYCCQAGESITRDTALVRSCGLYFAPQRLHIGADVWGQYWQQRQAPAWLASLTTLKPETSVTVKSLLDSLATLPAQNKAQEVLLDVVLDEAKIGVASMLGSRVRVKTWSWFADDKQEIRQGGFAGWLTDGTPLWVTGSGTSKTVLTRYATVLNRVLPVPTQVASGQCVEVELFARYPLKKITAEKSTTAVNPGVLNGRYRVTFTNGNHITFVSHGETTLLSEKGKLKLQSHLDREEYVARVLDREAKSTPPEAAKAMTVAIRTFLQQNANREGDCLTIPDSSATQRVSASPATTGARTMTAWTQDLIYAGDPVHYHGSRATEGTLSWRQATAQAGQGERYDQILAFAYPDNSLSRWGAPRSTCQLLPKAKAWLAKKMPQWRRILQAETGYNEPDVFAVCRLVSGFPYTDRQQKRLFIRNFFTLQDRLDLTHEYLHLAFDGYPTGLDENYIETLTRQLLMD.

The signal sequence occupies residues 1-19 (MNWRRIVWLLALVTLPTLA).

This is an uncharacterized protein from Escherichia coli (strain K12).